The chain runs to 183 residues: Hypoxanthine/guanine phosphoribosyltransferase (183 aa).

This sequence belongs to the purine/pyrimidine phosphoribosyltransferase family. Archaeal HPRT subfamily. In terms of assembly, homodimer.

It is found in the cytoplasm. It carries out the reaction IMP + diphosphate = hypoxanthine + 5-phospho-alpha-D-ribose 1-diphosphate. The catalysed reaction is GMP + diphosphate = guanine + 5-phospho-alpha-D-ribose 1-diphosphate. It functions in the pathway purine metabolism; IMP biosynthesis via salvage pathway; IMP from hypoxanthine: step 1/1. Catalyzes a salvage reaction resulting in the formation of IMP that is energically less costly than de novo synthesis. In Methanotorris igneus (strain DSM 5666 / JCM 11834 / Kol 5), this protein is Hypoxanthine/guanine phosphoribosyltransferase.